Consider the following 308-residue polypeptide: Polyketide transferase claH (308 aa).

The abhydrolase domain stretch occupies residues 50–280 (SDIAVYFSQQ…RVEVAAGKSH (231 aa)).

It belongs to the polyketide transferase af380 family.

The protein operates within secondary metabolite biosynthesis. Polyketide transferase; part of the cla gene cluster that produces clavatol and ortho-quinone methide. The clavatol biosynthesis cluster cla and the terrestric acid cluster tra are both involved in the production of peniphenones and penilactones. The non-reducing PKS claF is responsible for the formation of clavatol from successive condensations of 3 malonyl-CoA units, presumably with a simple acetyl-CoA starter unit, and 2 methylation steps. The esterase claE probably collaborates with claF by catalyzing the hydrolysis of ACP-bound acyl intermediates to free the ACP from stalled intermediates. The clavatol oxidase claD then converts clavatol to hydroxyclavatol. Spontaneous dehydration of hydroxyclavatol leads to the accumulation of the highly active ortho-quinone methide. On the other hand, the PKS-NRPS hybrid traA is involved in the formation of crustosic acid, with the help of traB and traD. The polyketide synthase module (PKS) of traA is responsible for the synthesis of the polyketide backbone via the condensation of an acetyl-CoA starter unit with 3 malonyl-CoA units. The downstream nonribosomal peptide synthetase (NRPS) module then amidates the carboxyl end of the polyketide with L-malic acid. Because traA lacks a designated enoylreductase (ER) domain, the required activity is provided the enoyl reductase traG. Crustosic acid undergoes decarboxylation and isomerization to the terrestric acid, catalyzed by the 2-oxoglutarate-dependent dioxygenase traH. Both acids are further converted to the 2 gamma-butyrolactones (R)-5-methyltetronic acid and (S)-5-carboxylmethyltetronic acid, with involvement of the cytochrome P450 monooxygenase claJ. Spontaneous addition of the methide to these gamma-butyrolactones leads to peniphenone D and penilactone D, which undergo again stereospecific attacking by methide to give penilactones A and B. The function of the polyketide transferase claH has not been investigated yet. This Penicillium crustosum (Blue mold fungus) protein is Polyketide transferase claH.